A 112-amino-acid polypeptide reads, in one-letter code: Gonad-inhibiting hormone (112 aa).

A signal peptide spans Met-1–Gln-31. 3 cysteine pairs are disulfide-bonded: Cys-41–Cys-78, Cys-58–Cys-74, and Cys-61–Cys-87. Position 109 is an alanine amide (Ala-109).

As to expression, produced in the eyestalk X-organ sinus gland complex of male and female lobsters.

It localises to the secreted. Its function is as follows. Inhibits vitellogenesis in female animals. Plays a prominent role in the regulation of reproduction/molting processes. This chain is Gonad-inhibiting hormone, found in Homarus americanus (American lobster).